A 505-amino-acid polypeptide reads, in one-letter code: 2,3-bisphosphoglycerate-independent phosphoglycerate mutase (505 aa).

Residues Asp13 and Ser63 each contribute to the Mn(2+) site. Ser63 acts as the Phosphoserine intermediate in catalysis. Residues His124, 153–154 (RD), Arg183, Arg189, 254–257 (RADR), and Lys330 contribute to the substrate site. Residues Asp396, His400, Asp437, His438, and His456 each coordinate Mn(2+).

It belongs to the BPG-independent phosphoglycerate mutase family. As to quaternary structure, monomer. Requires Mn(2+) as cofactor.

The enzyme catalyses (2R)-2-phosphoglycerate = (2R)-3-phosphoglycerate. It participates in carbohydrate degradation; glycolysis; pyruvate from D-glyceraldehyde 3-phosphate: step 3/5. Its function is as follows. Catalyzes the interconversion of 2-phosphoglycerate and 3-phosphoglycerate. This chain is 2,3-bisphosphoglycerate-independent phosphoglycerate mutase, found in Roseobacter denitrificans (strain ATCC 33942 / OCh 114) (Erythrobacter sp. (strain OCh 114)).